Reading from the N-terminus, the 181-residue chain is UPF0302 protein LMOf2365_1950 (181 aa).

The protein belongs to the UPF0302 family.

The protein is UPF0302 protein LMOf2365_1950 of Listeria monocytogenes serotype 4b (strain F2365).